Reading from the N-terminus, the 529-residue chain is Bifunctional purine biosynthesis protein PurH (529 aa).

Residues 1–148 (MQQRRPVRRA…KNHKDVAIVV (148 aa)) form the MGS-like domain. Residue lysine 287 is modified to N6-acetyllysine.

Belongs to the PurH family.

It catalyses the reaction (6R)-10-formyltetrahydrofolate + 5-amino-1-(5-phospho-beta-D-ribosyl)imidazole-4-carboxamide = 5-formamido-1-(5-phospho-D-ribosyl)imidazole-4-carboxamide + (6S)-5,6,7,8-tetrahydrofolate. The catalysed reaction is IMP + H2O = 5-formamido-1-(5-phospho-D-ribosyl)imidazole-4-carboxamide. It functions in the pathway purine metabolism; IMP biosynthesis via de novo pathway; 5-formamido-1-(5-phospho-D-ribosyl)imidazole-4-carboxamide from 5-amino-1-(5-phospho-D-ribosyl)imidazole-4-carboxamide (10-formyl THF route): step 1/1. The protein operates within purine metabolism; IMP biosynthesis via de novo pathway; IMP from 5-formamido-1-(5-phospho-D-ribosyl)imidazole-4-carboxamide: step 1/1. The chain is Bifunctional purine biosynthesis protein PurH from Escherichia coli (strain SMS-3-5 / SECEC).